Here is a 349-residue protein sequence, read N- to C-terminus: Threonine-rich protein (349 aa).

The first 19 residues, 1 to 19 (MKGLTLACIAATVVAASHA), serve as a signal peptide directing secretion. The N-linked (GlcNAc...) asparagine glycan is linked to N257. The disordered stretch occupies residues 300–326 (QPDVSPMSVRKRRQAESAEEDDDLVGD). Acidic residues predominate over residues 316–326 (SAEEDDDLVGD). Residues 316-349 (SAEEDDDLVGDMEDLKELEQEIQEALEEVEKLDV) are a coiled coil.

Component of the acid-insoluble and acid-soluble organic matrix of calcified layers of the shell (at protein level).

Its subcellular location is the secreted. The sequence is that of Threonine-rich protein from Lottia gigantea (Giant owl limpet).